The sequence spans 446 residues: Probable inactive lipase MT1628 (446 aa).

The protein belongs to the AB hydrolase superfamily. Lipase family.

This chain is Probable inactive lipase MT1628, found in Mycobacterium tuberculosis (strain CDC 1551 / Oshkosh).